Reading from the N-terminus, the 225-residue chain is Orotidine 5'-phosphate decarboxylase (225 aa).

Substrate-binding positions include Asp9, Lys31, 58-67, Thr115, Arg176, Gln184, Gly204, and Arg205; that span reads DLKLHDIPNT. The active-site Proton donor is the Lys60.

The protein belongs to the OMP decarboxylase family. Type 1 subfamily. In terms of assembly, homodimer.

The enzyme catalyses orotidine 5'-phosphate + H(+) = UMP + CO2. Its pathway is pyrimidine metabolism; UMP biosynthesis via de novo pathway; UMP from orotate: step 2/2. Functionally, catalyzes the decarboxylation of orotidine 5'-monophosphate (OMP) to uridine 5'-monophosphate (UMP). The polypeptide is Orotidine 5'-phosphate decarboxylase (Wolbachia sp. subsp. Brugia malayi (strain TRS)).